The following is a 363-amino-acid chain: Phosphoserine aminotransferase (363 aa).

R42 provides a ligand contact to L-glutamate. Residues G76–R77, W102, T156, D175, and Q198 each bind pyridoxal 5'-phosphate. The residue at position 199 (K199) is an N6-(pyridoxal phosphate)lysine. A pyridoxal 5'-phosphate-binding site is contributed by N240 to T241.

Belongs to the class-V pyridoxal-phosphate-dependent aminotransferase family. SerC subfamily. In terms of assembly, homodimer. The cofactor is pyridoxal 5'-phosphate.

It is found in the cytoplasm. The enzyme catalyses O-phospho-L-serine + 2-oxoglutarate = 3-phosphooxypyruvate + L-glutamate. The catalysed reaction is 4-(phosphooxy)-L-threonine + 2-oxoglutarate = (R)-3-hydroxy-2-oxo-4-phosphooxybutanoate + L-glutamate. It participates in amino-acid biosynthesis; L-serine biosynthesis; L-serine from 3-phospho-D-glycerate: step 2/3. Its pathway is cofactor biosynthesis; pyridoxine 5'-phosphate biosynthesis; pyridoxine 5'-phosphate from D-erythrose 4-phosphate: step 3/5. Catalyzes the reversible conversion of 3-phosphohydroxypyruvate to phosphoserine and of 3-hydroxy-2-oxo-4-phosphonooxybutanoate to phosphohydroxythreonine. This is Phosphoserine aminotransferase from Shewanella sp. (strain MR-4).